Consider the following 449-residue polypeptide: Xylose isomerase (449 aa).

Residues H103 and D106 contribute to the active site. The Mg(2+) site is built by E234, E270, H273, D298, D309, D311, and D342.

The protein belongs to the xylose isomerase family. As to quaternary structure, homotetramer. Mg(2+) is required as a cofactor.

It localises to the cytoplasm. The enzyme catalyses alpha-D-xylose = alpha-D-xylulofuranose. The sequence is that of Xylose isomerase from Levilactobacillus brevis (strain ATCC 367 / BCRC 12310 / CIP 105137 / JCM 1170 / LMG 11437 / NCIMB 947 / NCTC 947) (Lactobacillus brevis).